Consider the following 330-residue polypeptide: Aspartate--ammonia ligase (330 aa).

Belongs to the class-II aminoacyl-tRNA synthetase family. AsnA subfamily.

Its subcellular location is the cytoplasm. The enzyme catalyses L-aspartate + NH4(+) + ATP = L-asparagine + AMP + diphosphate + H(+). It participates in amino-acid biosynthesis; L-asparagine biosynthesis; L-asparagine from L-aspartate (ammonia route): step 1/1. This is Aspartate--ammonia ligase from Streptococcus pyogenes serotype M5 (strain Manfredo).